A 572-amino-acid chain; its full sequence is NADP-dependent malic enzyme (572 aa).

Residue methionine 1 is modified to N-acetylmethionine. Catalysis depends on tyrosine 102, which acts as the Proton donor. Residue arginine 155 coordinates NADP(+). Lysine 173 serves as the catalytic Proton acceptor. Residues glutamate 245, aspartate 246, and aspartate 269 each contribute to the a divalent metal cation site. NADP(+)-binding positions include aspartate 269 and 301–318; that span reads GAGEAALGIAHLIVMAME. Serine 336 is modified (phosphoserine). Position 408 (asparagine 408) interacts with NADP(+).

This sequence belongs to the malic enzymes family. Homotetramer. Mg(2+) is required as a cofactor. Requires Mn(2+) as cofactor. In terms of tissue distribution, ubiquitous. Up-regulated by 3,5,3'-triiodo-L-thyronine in the liver, kidney and heart.

It is found in the cytoplasm. It carries out the reaction (S)-malate + NADP(+) = pyruvate + CO2 + NADPH. The catalysed reaction is oxaloacetate + H(+) = pyruvate + CO2. Its function is as follows. Catalyzes the oxidative decarboxylation of (S)-malate in the presence of NADP(+) and divalent metal ions, and decarboxylation of oxaloacetate. This chain is NADP-dependent malic enzyme (Me1), found in Rattus norvegicus (Rat).